Here is a 190-residue protein sequence, read N- to C-terminus: Potassium-transporting ATPase KdpC subunit (190 aa).

Residues 10 to 30 (TFIFLLLITGGVYPLLTTVLG) traverse the membrane as a helical segment.

The protein belongs to the KdpC family. As to quaternary structure, the system is composed of three essential subunits: KdpA, KdpB and KdpC.

Its subcellular location is the cell inner membrane. Its function is as follows. Part of the high-affinity ATP-driven potassium transport (or Kdp) system, which catalyzes the hydrolysis of ATP coupled with the electrogenic transport of potassium into the cytoplasm. This subunit acts as a catalytic chaperone that increases the ATP-binding affinity of the ATP-hydrolyzing subunit KdpB by the formation of a transient KdpB/KdpC/ATP ternary complex. The polypeptide is Potassium-transporting ATPase KdpC subunit (Escherichia coli (strain K12 / MC4100 / BW2952)).